Consider the following 528-residue polypeptide: Phosphoenolpyruvate carboxykinase (ATP) (528 aa).

Residues Arg56, Tyr192, and Lys198 each coordinate substrate. Residues Lys198, His217, and 233 to 241 (GLSGTGKTT) each bind ATP. The Mn(2+) site is built by Lys198 and His217. Residue Asp254 coordinates Mn(2+). ATP contacts are provided by Glu282, Arg319, and Thr444. A substrate-binding site is contributed by Arg319.

It belongs to the phosphoenolpyruvate carboxykinase (ATP) family. Mn(2+) is required as a cofactor.

It localises to the cytoplasm. The enzyme catalyses oxaloacetate + ATP = phosphoenolpyruvate + ADP + CO2. The protein operates within carbohydrate biosynthesis; gluconeogenesis. Functionally, involved in the gluconeogenesis. Catalyzes the conversion of oxaloacetate (OAA) to phosphoenolpyruvate (PEP) through direct phosphoryl transfer between the nucleoside triphosphate and OAA. This is Phosphoenolpyruvate carboxykinase (ATP) from Bacillus pumilus (strain SAFR-032).